The chain runs to 635 residues: Protein phosphatase PP2A regulatory subunit A (635 aa).

Residues 1-27 (MSGARSTTAGAVPSAATTSTTSTTSNS) show a composition bias toward low complexity. Residues 1 to 33 (MSGARSTTAGAVPSAATTSTTSTTSNSKDSDSN) are disordered. 15 HEAT repeats span residues 34-72 (ESLY…GPER), 73-111 (TRNE…GGPQ), 112-150 (YATI…SQEQ), 151-189 (LFSD…KDDS), 190-228 (LRKN…TQNL), 229-273 (GLST…NAKG), 274-316 (DESH…SNQA), 317-356 (YIDE…DPSI), 357-395 (ILNK…NKDQ), 396-434 (VINN…GIEL), 435-473 (LSDS…GMQF), 474-512 (FDQQ…GSDW), 513-553 (CRDE…SLDV), 554-598 (VTEQ…YDAL), and 599-632 (IKNT…CQEL).

Belongs to the phosphatase 2A regulatory subunit A family. As to quaternary structure, PP2A exists in several trimeric forms, all of which consist of a core composed of a catalytic subunit associated with a 65 kDa regulatory subunit (PR65) (subunit A). The core complex associates with a third, variable subunit (subunit B), which confers distinct properties to the holoenzyme.

Functionally, phosphatase 2A affects a variety of biological processes in the cell such as transcription, cell cycle progression and cellular morphogenesis, and provides an initial identification of critical substrates for this phosphatase. The regulatory subunit may direct the catalytic subunit to distinct, albeit overlapping, subsets of substrates. The polypeptide is Protein phosphatase PP2A regulatory subunit A (TPD3) (Saccharomyces cerevisiae (strain ATCC 204508 / S288c) (Baker's yeast)).